Reading from the N-terminus, the 300-residue chain is Energy-coupling factor transporter ATP-binding protein EcfA2 (300 aa).

The 256-residue stretch at Ile-3 to Leu-258 folds into the ABC transporter domain. ATP is bound at residue Gly-40–Thr-47.

The protein belongs to the ABC transporter superfamily. Energy-coupling factor EcfA family. Forms a stable energy-coupling factor (ECF) transporter complex composed of 2 membrane-embedded substrate-binding proteins (S component), 2 ATP-binding proteins (A component) and 2 transmembrane proteins (T component).

It localises to the cell membrane. Functionally, ATP-binding (A) component of a common energy-coupling factor (ECF) ABC-transporter complex. Unlike classic ABC transporters this ECF transporter provides the energy necessary to transport a number of different substrates. The chain is Energy-coupling factor transporter ATP-binding protein EcfA2 from Mesomycoplasma hyopneumoniae (strain 7448) (Mycoplasma hyopneumoniae).